Here is a 448-residue protein sequence, read N- to C-terminus: Beta-glucosidase A (448 aa).

Glu-166 (proton donor) is an active-site residue. Glu-352 (nucleophile) is an active-site residue.

It belongs to the glycosyl hydrolase 1 family. Homooctamer.

It carries out the reaction Hydrolysis of terminal, non-reducing beta-D-glucosyl residues with release of beta-D-glucose.. In terms of biological role, bglA is intracellular and cleaves cellobiose probably through inorganic phosphate mediated hydrolysis. This Paenibacillus polymyxa (Bacillus polymyxa) protein is Beta-glucosidase A (bglA).